Consider the following 310-residue polypeptide: L-lactate dehydrogenase (310 aa).

NAD(+) is bound by residues V11, D32, Y62, and 76 to 77 (GV). Residues Q79, R85, and 117 to 120 (NPVD) each bind substrate. NAD(+)-binding positions include 115–117 (ATN) and S140. 145–148 (DTAR) contacts substrate. Residues R150 and H165 each contribute to the beta-D-fructose 1,6-bisphosphate site. The active-site Proton acceptor is H172. The residue at position 218 (Y218) is a Phosphotyrosine. T227 lines the substrate pocket.

It belongs to the LDH/MDH superfamily. LDH family. Homotetramer.

It is found in the cytoplasm. The enzyme catalyses (S)-lactate + NAD(+) = pyruvate + NADH + H(+). The protein operates within fermentation; pyruvate fermentation to lactate; (S)-lactate from pyruvate: step 1/1. With respect to regulation, activated by citrate at pH 5. Allosterically activated by fructose 1,6-bisphosphate (FBP) at pH from 5.8 to 7.2. Functionally, catalyzes the conversion of lactate to pyruvate. The protein is L-lactate dehydrogenase of Thermus aquaticus.